Reading from the N-terminus, the 422-residue chain is Protein FAM53B (422 aa).

Serine 118, serine 167, serine 169, serine 179, serine 212, and serine 268 each carry phosphoserine. The span at 245–268 (SANSTPASTPELARRSSGLSRSRS) shows a compositional bias: low complexity. Positions 245–269 (SANSTPASTPELARRSSGLSRSRSQ) are disordered. Residues 281–284 (KRRR) carry the Nuclear localization signal motif.

Belongs to the FAM53 family. Interacts with CTNNB1. As to expression, detected in skeletal muscle, kidney, spleen, thyroid, testis, ovary, small intestine, colon and peripheral blood.

It localises to the nucleus. In terms of biological role, acts as a regulator of Wnt signaling pathway by regulating beta-catenin (CTNNB1) nuclear localization. The chain is Protein FAM53B from Homo sapiens (Human).